The chain runs to 263 residues: tRNA (guanine-N(7)-)-methyltransferase (263 aa).

A disordered region spans residues 1–33 (MSDHGRMHSTGSEVAAPVAPDPDTEGVHPHFNR). S-adenosyl-L-methionine-binding residues include E89, E114, D146, and D169. D169 is a catalytic residue. Substrate-binding positions include K173, D205, and 242 to 245 (TKYE).

This sequence belongs to the class I-like SAM-binding methyltransferase superfamily. TrmB family.

It catalyses the reaction guanosine(46) in tRNA + S-adenosyl-L-methionine = N(7)-methylguanosine(46) in tRNA + S-adenosyl-L-homocysteine. It participates in tRNA modification; N(7)-methylguanine-tRNA biosynthesis. Functionally, catalyzes the formation of N(7)-methylguanine at position 46 (m7G46) in tRNA. In Mycolicibacterium gilvum (strain PYR-GCK) (Mycobacterium gilvum (strain PYR-GCK)), this protein is tRNA (guanine-N(7)-)-methyltransferase.